The chain runs to 576 residues: Eukaryotic translation initiation factor 2A (576 aa).

WD repeat units lie at residues 71-119, 266-307, 308-349, and 351-396; these read LPAA…LVFS, DREG…VSII, PPAP…KKIT, and VEAA…MFYE. Disordered stretches follow at residues 422–461 and 475–505; these read SASL…QNST and GSAN…NNKK. The segment covering 475-486 has biased composition (polar residues); the sequence is GSANKHVNSSRQ.

Belongs to the WD repeat EIF2A family.

The protein localises to the cytoplasm. Functionally, functions in the early steps of protein synthesis of a small number of specific mRNAs. Acts by directing the binding of methionyl-tRNAi to 40S ribosomal subunits. In contrast to the eIF-2 complex, it binds methionyl-tRNAi to 40S subunits in a codon-dependent manner, whereas the eIF-2 complex binds methionyl-tRNAi to 40S subunits in a GTP-dependent manner. This Schizosaccharomyces pombe (strain 972 / ATCC 24843) (Fission yeast) protein is Eukaryotic translation initiation factor 2A.